A 266-amino-acid polypeptide reads, in one-letter code: Ribosome-recycling factor, chloroplastic (266 aa).

Positions 1–26 are enriched in low complexity; the sequence is MPPLHAVSPAAAAAPPRALSSAARVP. The disordered stretch occupies residues 1-30; the sequence is MPPLHAVSPAAAAAPPRALSSAARVPQRPG. A chloroplast-targeting transit peptide spans 1 to 74; the sequence is MPPLHAVSPA…SDKRAVLRHA (74 aa). 2 coiled-coil regions span residues 75–109 and 207–266; these read TIEE…NTVR and VAIR…LMKI.

The protein belongs to the RRF family.

It localises to the plastid. Its subcellular location is the chloroplast. Its function is as follows. Responsible for the release of ribosomes from messenger RNA at the termination of chloroplastic protein biosynthesis. The chain is Ribosome-recycling factor, chloroplastic from Oryza sativa subsp. indica (Rice).